The sequence spans 425 residues: MAYFIDRRLNGKNKSAVNRQRFLRRYKSQIKQSISEAINKRSVTDVESGESVSIPIEDINEPSFHQGRGGERYRVHPGNDHFVQNDRVDRPQGGGAGGSGQGNAGKDGEGQDEFVFNISKDEYLDLLFEDLALPHLKKNQHRQLNEYKTHRAGYTANGVPANISVVRSLQNSLARRTAMTSGKRRRLAELEENLLRVENSEPAQLLEEQRLRNDIADLRARIKRVPFIDTFDLRYKNFEKRAEPSSQAVMFCLMDVSGSMDQPTKDMAKRFYILLYLFLSRTYKNVDVVYIRHHTQAKEVDEQEFFYSQETGGTIVSSALKLMDEVVKERYDPAQWNIYAAQASDGDNWADDSPLCHDILSRQILPVVRYYSYIEITRRAHQSLWREYEHLQATFDNFAIQHIREPEDIYPVFRELFKKQAEENY.

Positions 60–111 (NEPSFHQGRGGERYRVHPGNDHFVQNDRVDRPQGGGAGGSGQGNAGKDGEGQ) are disordered. Positions 68 to 90 (RGGERYRVHPGNDHFVQNDRVDR) are enriched in basic and acidic residues. Over residues 92 to 105 (QGGGAGGSGQGNAG) the composition is skewed to gly residues.

This sequence belongs to the UPF0229 family.

The polypeptide is UPF0229 protein ETA_15540 (Erwinia tasmaniensis (strain DSM 17950 / CFBP 7177 / CIP 109463 / NCPPB 4357 / Et1/99)).